Here is a 386-residue protein sequence, read N- to C-terminus: Orphan methyltransferase M.SssI (386 aa).

One can recognise an SAM-dependent MTase C5-type domain in the interval 11-386 (LRVFEAFAGI…LEAIIDKIGG (376 aa)). Cys-141 is an active-site residue.

This sequence belongs to the class I-like SAM-binding methyltransferase superfamily. C5-methyltransferase family.

It carries out the reaction a 2'-deoxycytidine in DNA + S-adenosyl-L-methionine = a 5-methyl-2'-deoxycytidine in DNA + S-adenosyl-L-homocysteine + H(+). Functionally, this de novo methylase acts completely and exclusively on CG residues in DNA; methylates unmethylated and hemi-methylated DNA. The chain is Orphan methyltransferase M.SssI (sssIM) from Spiroplasma monobiae (strain ATCC 33825 / MQ-1).